The chain runs to 213 residues: Cell division protein SepF (213 aa).

The disordered stretch occupies residues 27 to 103 (VDAPAPRRAP…GSLRGSAPTR (77 aa)). Composition is skewed to basic and acidic residues over residues 35–51 (APVE…RFAD) and 72–90 (DEDR…DRPA).

Belongs to the SepF family. In terms of assembly, homodimer. Interacts with FtsZ.

The protein localises to the cytoplasm. Functionally, cell division protein that is part of the divisome complex and is recruited early to the Z-ring. Probably stimulates Z-ring formation, perhaps through the cross-linking of FtsZ protofilaments. Its function overlaps with FtsA. The polypeptide is Cell division protein SepF (Mycobacteroides abscessus (strain ATCC 19977 / DSM 44196 / CCUG 20993 / CIP 104536 / JCM 13569 / NCTC 13031 / TMC 1543 / L948) (Mycobacterium abscessus)).